A 150-amino-acid polypeptide reads, in one-letter code: Transthyretin (150 aa).

The signal sequence occupies residues 1-20 (MASYRLLLLCLAGLVFVSEA). Cys-30 is modified (sulfocysteine). Lys-35 lines the L-thyroxine pocket. 4-carboxyglutamate is present on Glu-62. Residue Glu-74 coordinates L-thyroxine. An N-linked (GlcNAc...) asparagine glycan is attached at Asn-118. Ser-137 provides a ligand contact to L-thyroxine.

The protein belongs to the transthyretin family. In terms of assembly, homotetramer. Dimer of dimers. In the homotetramer, subunits assemble around a central channel that can accommodate two ligand molecules. Interacts with RBP4. Sulfonation of the reactive cysteine Cys-30 enhances the stability of the native conformation of TTR, avoiding misassembly of the protein leading to amyloid formation. In terms of tissue distribution, detected in plasma and cerebrospinal fluid (at protein level). Highly expressed in the choroid plexus. Detected in liver.

It is found in the secreted. Thyroid hormone-binding protein. Probably transports thyroxine from the bloodstream to the brain. In Sus scrofa (Pig), this protein is Transthyretin (TTR).